The sequence spans 165 residues: K(+)/H(+) antiporter subunit KhtT (165 aa).

The region spanning 76-161 (LESIEMAFSD…LKKLIHDFLS (86 aa)) is the RCK C-terminal domain.

The transporter is composed of the integral membrane protein KhtU and the regulatory protein KhtT.

It localises to the cell membrane. Binds cyclic di-AMP (c-di-AMP), which may regulate the activity. Functionally, required for activity of the potassium/proton antiporter KhtU. Involved in protection of the cell from methylglyoxal, a toxic by-product of glycolysis. This chain is K(+)/H(+) antiporter subunit KhtT, found in Bacillus subtilis (strain 168).